Consider the following 652-residue polypeptide: uncharacterized protein (652 aa).

A compositionally biased stretch (basic and acidic residues) spans 1 to 13 (MSVTESKAKTERK). Residues 1 to 21 (MSVTESKAKTERKSSRKPAKT) form a disordered region.

It belongs to the ParB family.

This is an uncharacterized protein from Escherichia coli (strain K12).